Consider the following 93-residue polypeptide: Protein ea8.5 (93 aa).

This chain is Protein ea8.5 (ea8.5), found in Escherichia phage lambda (Bacteriophage lambda).